Consider the following 35-residue polypeptide: Tau/kappa-theraphotoxin-Pc1a (35 aa).

3 cysteine pairs are disulfide-bonded: cysteine 3/cysteine 17, cysteine 10/cysteine 22, and cysteine 16/cysteine 29. Phenylalanine 35 carries the phenylalanine amide modification.

The protein belongs to the neurotoxin 10 (Hwtx-1) family. 62 (Vatx) subfamily. As to expression, expressed by the venom gland.

It is found in the secreted. Its function is as follows. Selectively activates mammalian TRPV1, the capsaicin receptor, a non-selective cation channel expressed by sensory neurons of the pain pathway. Is less potent than VaTx2 and VaTx3. Interacts with distinct regions of the channel than capsaicin, since it only acts on the extracellular face of the channel, and capsaicin binds to the cytosolic side. Also activates avian TRPV1, which is insensitive to capsaicin. Significantly inhibits potassium channels Kv2.1/KCNB1. This Psalmopoeus cambridgei (Trinidad chevron tarantula) protein is Tau/kappa-theraphotoxin-Pc1a.